The sequence spans 77 residues: Putative antitoxin MazE7 (77 aa).

The tract at residues 49–77 is disordered; the sequence is REASHAETTTQAVRDEDREWEGTVGDGLG.

As to quaternary structure, forms a complex with cognate toxin MazF7.

Functionally, antitoxin component of a type II toxin-antitoxin (TA) system. The sequence is that of Putative antitoxin MazE7 (mazE7) from Mycobacterium tuberculosis (strain CDC 1551 / Oshkosh).